The chain runs to 1529 residues: Myosin-11 (1529 aa).

In terms of domain architecture, Myosin N-terminal SH3-like spans 11–60; it reads IVGSHVWIEDSDVAWIDGLVEKINGQDVEVQATNGKKITAKLSKIYPKDM. In terms of domain architecture, Myosin motor spans 65-735; the sequence is GGVDDMTKLS…QMAELDARRT (671 aa). ATP contacts are provided by residues 159–166 and 212–220; these read GESGAGKT and NNNSSRFGK. Actin-binding stretches follow at residues 498–532, 534–557, 592–616, and 616–638; these read LIEK…YQTF, THKR…AGEV, FPPL…KLQL, and LQQL…KPNN. IQ domains lie at 738–767, 761–790, 786–815, 809–838, 834–863, and 857–886; these read LSAA…ATIS, LRKA…QAAA, RQAA…AALV, LHVA…TKAA, QTKA…GVIL, and LKKG…ASRE. The stretch at 887–1059 forms a coiled coil; sequence TGALKEAKDM…VLRQQAVSIA (173 aa). Positions 993–1027 are enriched in basic and acidic residues; sequence EQEKQRADDATRKFDEAQESSEDRKKKLEDTEKKA. Disordered regions lie at residues 993-1031 and 1096-1115; these read EQEK…QQLQ and INRR…LNEK. Residues 1163-1472 enclose the Dilute domain; that stretch reads DRIIQTIGQA…IANMRVLMTE (310 aa).

It belongs to the TRAFAC class myosin-kinesin ATPase superfamily. Myosin family. Plant myosin class XI subfamily. As to quaternary structure, homodimer.

It localises to the cytoplasm. Its function is as follows. Myosin heavy chain that is required for the cell cycle-regulated transport of various organelles and proteins for their segregation. Functions by binding with its tail domain to receptor proteins on organelles and exerting force with its N-terminal motor domain against actin filaments, thereby transporting its cargo along polarized actin cables. Involved in trafficking of Golgi stacks, mitochondria and peroxisomes. This is Myosin-11 (XI-E) from Arabidopsis thaliana (Mouse-ear cress).